The sequence spans 179 residues: Ribosomal RNA small subunit methyltransferase G (179 aa).

S-adenosyl-L-methionine contacts are provided by residues Gly54, Phe59, 105–106 (IE), and Arg121.

It belongs to the methyltransferase superfamily. RNA methyltransferase RsmG family.

Its subcellular location is the cytoplasm. It catalyses the reaction guanosine(527) in 16S rRNA + S-adenosyl-L-methionine = N(7)-methylguanosine(527) in 16S rRNA + S-adenosyl-L-homocysteine. Specifically methylates the N7 position of guanine in position 527 of 16S rRNA. The protein is Ribosomal RNA small subunit methyltransferase G of Helicobacter bizzozeronii.